The primary structure comprises 385 residues: MILMVIELLSVFIALLACFYASYSDIKRGIIPNRLTFPVIGLGLLLNGARALMESDPWIFIYTAIFTAGIFALGYILWRMVAWAGGDVKLFTAVTSLLPFQPSLVSYSFLGTAFPVTASYPFPLTVIINSILALLPFLLVYVFFIIYTSRRHLMDEFMEPLRQYRTSMVLALVITSAVTLTFLITDFLPFQIIVLSLILVYLLTMVISRLPPRIKAVIVSVIIVYSLYKNFELTVSGVVILWVSITVIQLIRKLLTSITREALQDTMGVDELKEGMILASTLYRKGDEYYFDDSSLLDRFRTAARTGDVSALTYRGEPVVSAMAAGLREEEIETLRDLVSRGKIKDEFRIRRGMPFAPAIFIGLLVSLLIGDLAMILFRLFDIIF.

10 consecutive transmembrane segments (helical) span residues 1 to 21 (MILM…CFYA), 29 to 49 (GIIP…LNGA), 58 to 78 (WIFI…YILW), 80 to 100 (MVAW…LLPF), 104 to 124 (LVSY…PFPL), 126 to 146 (VIIN…FFII), 166 to 186 (TSMV…LITD), 187 to 207 (FLPF…TMVI), 231 to 251 (FELT…IQLI), and 358 to 378 (PAIF…MILF).

The protein belongs to the peptidase A24 family.

It is found in the cell membrane. Functionally, peptidase that processes the N-terminus of prepilins. The protein is Prepilin peptidase EppA of Methanothermobacter thermautotrophicus (strain ATCC 29096 / DSM 1053 / JCM 10044 / NBRC 100330 / Delta H) (Methanobacterium thermoautotrophicum).